The sequence spans 174 residues: UPF0316 protein Dhaf_3052 (174 aa).

Helical transmembrane passes span 4–24 (ILQFVLIIITINITYVTLTTI), 35–55 (VYASLLSVLEVFIYIMGLSII), and 59–79 (LDSYWNIAAYCCGYGVGVYLG).

It belongs to the UPF0316 family.

It is found in the cell membrane. The sequence is that of UPF0316 protein Dhaf_3052 from Desulfitobacterium hafniense (strain DSM 10664 / DCB-2).